Reading from the N-terminus, the 29-residue chain is Beta-hexatoxin-Mr1a (29 aa).

3 disulfide bridges follow: Cys2-Cys16, Cys9-Cys21, and Cys15-Cys26.

It belongs to the neurotoxin 15 family. 01 (magi-5) subfamily. As to expression, expressed by the venom gland.

Its subcellular location is the secreted. Its function is as follows. Insect and vertebrate active toxin. Binds at site 4 of mammalian voltage-gated sodium channels and shifts the activation voltage of the mammalian rNav1.2a (SCN2A) channel to more hyperpolarized voltages, whereas the insect channel, DmNav1 (para), is not affected. Causes temporary paralysis when injected into lepidopteran larvae at 8.6 nmol/g. A low intracranial injection dose into mice causes lacrimation, closure of the eyes and sweating. A high injection dose causes extensive lacrimation and death. This chain is Beta-hexatoxin-Mr1a, found in Macrothele raveni (Funnel-web spider).